Consider the following 268-residue polypeptide: Zinc transporter ZupT (268 aa).

Helical transmembrane passes span 5–25 (ILFAFALTLFAGLSTGVGSLI), 36–56 (VLTISLGFSAGVMIYVAMIEI), 75–95 (VVTVLSFFAGIFLIALIDKLI), 124–144 (MGLFSAVAIGIHNFPEGLATF), 157–177 (IAVAIAIHNIPEGLAVSAPIF), 187–207 (FILSFLSGLAEPVGALIGYFL), 211–231 (FFSPSLFGVVFGAVAGIMVYI), and 248–268 (FAIGGVIAGMVVMAISLLLFT). Residues Asn-136 and Glu-139 each coordinate Fe(2+). Zn(2+)-binding residues include Glu-139 and His-164. Fe(2+) contacts are provided by Asn-165, Glu-168, and Glu-197. Glu-168 lines the Zn(2+) pocket.

The protein belongs to the ZIP transporter (TC 2.A.5) family. ZupT subfamily.

It is found in the cell membrane. It carries out the reaction Zn(2+)(in) = Zn(2+)(out). Its function is as follows. Mediates zinc uptake. May also transport other divalent cations. This chain is Zinc transporter ZupT, found in Chlorobium chlorochromatii (strain CaD3).